Reading from the N-terminus, the 931-residue chain is Myocardin-related transcription factor A (931 aa).

The interval 1–256 (MPPLKSPAAF…KQDRGAPPMD (256 aa)) is mediates interaction with SCAI and ACTB. At Ser6 the chain carries Phosphoserine. Positions 6-23 (SPAAFHEQRRSLERARTE) are intervening spacer sequence 1. The stretch at 24–49 (DYLKRKIRSRPERSELVRMHILEETS) is one RPEL 1 repeat. The Bipartite Nuclear localization signal motif lies at 27 to 65 (KRKIRSRPERSELVRMHILEETSAEPSLQAKQLKLKRAR). Residues 50 to 67 (AEPSLQAKQLKLKRARLA) form an intervening spacer sequence 2 region. The RPEL 2 repeat unit spans residues 68-93 (DDLNEKIAQRPGPMELVEKNILPVES). Disordered stretches follow at residues 110–256 (ADSS…PPMD) and 290–344 (PAPP…GALP). Residues Ser124, Ser139, and Ser156 each carry the phosphoserine modification. The span at 151 to 162 (SATSASPTQVVS) shows a compositional bias: polar residues. Pro residues predominate over residues 180–189 (PPLPPPPLLP). The span at 191-215 (SLTNGTTIPTAKSTPTLIKQSQPKS) shows a compositional bias: polar residues. Over residues 216-231 (ASEKSQRSKKAKELKP) the composition is skewed to basic and acidic residues. The residue at position 305 (Thr305) is a Phosphothreonine. Phosphoserine occurs at positions 310 and 312. Over residues 310–320 (SLSTTNSSSSS) the composition is skewed to low complexity. A Phosphothreonine modification is found at Thr313. Phosphoserine occurs at positions 317, 320, and 333. The SAP domain maps to 347–381 (LDDMKVAELKQELKLRSLPVSGTKTELIERLRAYQ). Phosphoserine occurs at positions 385 and 446. Residues 444 to 476 (FGSTGSTPPVSPTPSERSLLSTGDENSTPGDTF) form a disordered region. The residue at position 447 (Thr447) is a Phosphothreonine. Position 449 is a phosphoserine (Ser449). Phosphothreonine is present on Thr450. Phosphoserine is present on Ser454. Thr456 is modified (phosphothreonine). Phosphoserine is present on Ser458. The span at 459–473 (ERSLLSTGDENSTPG) shows a compositional bias: polar residues. A phosphoserine mark is found at Ser482, Ser492, Ser507, and Ser511. A coiled-coil region spans residues 515-563 (RAELEGRDKDQMLQEKDKQIEALTRMLRQKQQLVERLKLQLEQEKRAQQ). 3 disordered regions span residues 558 to 577 (EKRAQQPAPAPAPLGTPVKQ), 674 to 746 (KNAD…SSSQ), and 763 to 816 (ADFK…RLED). The segment covering 678–694 (SPGLSSGSPQQPSSQPG) has biased composition (low complexity). Residues Ser685, Ser691, and Ser695 each carry the phosphoserine modification. Residues 732–746 (MSQQPKQQENGSSSQ) are compositionally biased toward polar residues. Basic and acidic residues predominate over residues 763-778 (ADFKEPPSLPGKEKPS). The segment covering 784–799 (GSPLAAQPSPSAELPQ) has biased composition (low complexity). 3 positions are modified to phosphoserine: Ser792, Ser807, and Ser859.

Interacts with SRF, forming the SRF-MRTFA nuclear complex which binds the 5'-CArG-3' consensus motif (CArG box) on DNA via SRF. Interacts (via RPEL repeats) with globular actin (G-actin), thereby regulating its subcellular location and activity of the complex formed with SRF. Either forms a trivalent (by binding three G-actin monomers) or pentavalent (by binding five G-actin monomers) complex with G-actin. Forms a nuclear ternary complex with SCAI and SRF, leading to suppress MRTFA-induced SRF transcriptional activity. Interacts with beta-actin (ACTB); interaction with ACTB prevents interaction with SCAI. Interacts with MRTFB. Post-translationally, phosphorylation at Ser-6 by Erk inhibits binding of globular actin (G-actin), unmasking the nuclear localization signal (NLS) and promoting nuclear import. In terms of tissue distribution, ubiquitously expressed, has been detected in lung, placenta, small intestine, liver, kidney, spleen, thymus, colon, muscle, heart and brain. Expressed in peripheral blood mononuclear cells (at protein level).

Its subcellular location is the cytoplasm. The protein resides in the nucleus. Its function is as follows. Transcription coactivator that associates with the serum response factor (SRF) transcription factor to control expression of genes regulating the cytoskeleton during development, morphogenesis and cell migration. The SRF-MRTFA complex activity responds to Rho GTPase-induced changes in cellular globular actin (G-actin) concentration, thereby coupling cytoskeletal gene expression to cytoskeletal dynamics. MRTFA binds G-actin via its RPEL repeats, regulating activity of the MRTFA-SRF complex. Activity is also regulated by filamentous actin (F-actin) in the nucleus. The chain is Myocardin-related transcription factor A from Homo sapiens (Human).